Consider the following 167-residue polypeptide: Small ribosomal subunit protein uS5 (167 aa).

The region spanning 12-75 (LQEKLIAVNR…EKARRNMVTI (64 aa)) is the S5 DRBM domain.

Belongs to the universal ribosomal protein uS5 family. In terms of assembly, part of the 30S ribosomal subunit. Contacts proteins S4 and S8.

Its function is as follows. With S4 and S12 plays an important role in translational accuracy. Located at the back of the 30S subunit body where it stabilizes the conformation of the head with respect to the body. The protein is Small ribosomal subunit protein uS5 of Vibrio vulnificus (strain CMCP6).